The following is a 637-amino-acid chain: tRNA uridine 5-carboxymethylaminomethyl modification enzyme MnmG (637 aa).

FAD contacts are provided by residues Gly15 to Gly20, Ile127, and Ser182. Gly276 to Phe290 lines the NAD(+) pocket. Residue Gln373 coordinates FAD.

This sequence belongs to the MnmG family. In terms of assembly, homodimer. Heterotetramer of two MnmE and two MnmG subunits. Requires FAD as cofactor.

The protein resides in the cytoplasm. Functionally, NAD-binding protein involved in the addition of a carboxymethylaminomethyl (cmnm) group at the wobble position (U34) of certain tRNAs, forming tRNA-cmnm(5)s(2)U34. The protein is tRNA uridine 5-carboxymethylaminomethyl modification enzyme MnmG of Streptococcus pneumoniae serotype 4 (strain ATCC BAA-334 / TIGR4).